Consider the following 200-residue polypeptide: Thymidine kinase (200 aa).

ATP-binding positions include 15–22 and 88–91; these read GPMYSGKS and DEVQ. Catalysis depends on Glu-89, which acts as the Proton acceptor. Zn(2+) is bound by residues Cys-145, Cys-148, Cys-177, and Cys-180.

Belongs to the thymidine kinase family. Homotetramer.

The protein localises to the cytoplasm. The enzyme catalyses thymidine + ATP = dTMP + ADP + H(+). This chain is Thymidine kinase, found in Mycoplasma mobile (strain ATCC 43663 / 163K / NCTC 11711) (Mesomycoplasma mobile).